The following is a 156-amino-acid chain: MSRRHRAEKREINPDPKFGDLVITKFMNAIMFDGKKSVAERIVYGALDSVEKKVKADPVDLFHRALENVAPHIEVRSRRVGGATYQVPIDVRPDRRQALAIRWLISAACGRNETTMIERLSGELMDAANNRGSAVKKREDVHRMAEANRAFSHYRW.

This sequence belongs to the universal ribosomal protein uS7 family. In terms of assembly, part of the 30S ribosomal subunit. Contacts proteins S9 and S11.

One of the primary rRNA binding proteins, it binds directly to 16S rRNA where it nucleates assembly of the head domain of the 30S subunit. Is located at the subunit interface close to the decoding center, probably blocks exit of the E-site tRNA. In Bartonella tribocorum (strain CIP 105476 / IBS 506), this protein is Small ribosomal subunit protein uS7.